Consider the following 178-residue polypeptide: ATP-dependent protease subunit HslV (178 aa).

Residue Thr-7 is part of the active site. 3 residues coordinate Na(+): Gly-162, Cys-165, and Thr-168.

This sequence belongs to the peptidase T1B family. HslV subfamily. A double ring-shaped homohexamer of HslV is capped on each side by a ring-shaped HslU homohexamer. The assembly of the HslU/HslV complex is dependent on binding of ATP.

It localises to the cytoplasm. The enzyme catalyses ATP-dependent cleavage of peptide bonds with broad specificity.. Its activity is regulated as follows. Allosterically activated by HslU binding. In terms of biological role, protease subunit of a proteasome-like degradation complex believed to be a general protein degrading machinery. This chain is ATP-dependent protease subunit HslV, found in Cupriavidus pinatubonensis (strain JMP 134 / LMG 1197) (Cupriavidus necator (strain JMP 134)).